Reading from the N-terminus, the 146-residue chain is Large ribosomal subunit protein uL13 (146 aa).

The protein belongs to the universal ribosomal protein uL13 family. As to quaternary structure, part of the 50S ribosomal subunit.

Functionally, this protein is one of the early assembly proteins of the 50S ribosomal subunit, although it is not seen to bind rRNA by itself. It is important during the early stages of 50S assembly. The sequence is that of Large ribosomal subunit protein uL13 from Bdellovibrio bacteriovorus (strain ATCC 15356 / DSM 50701 / NCIMB 9529 / HD100).